We begin with the raw amino-acid sequence, 77 residues long: Putative regulatory protein tsl2331 (77 aa).

This sequence belongs to the RemA family.

The chain is Putative regulatory protein tsl2331 from Thermosynechococcus vestitus (strain NIES-2133 / IAM M-273 / BP-1).